Reading from the N-terminus, the 270-residue chain is Tryptophan synthase alpha chain (270 aa).

Residues glutamate 49 and aspartate 60 each act as proton acceptor in the active site.

Belongs to the TrpA family. As to quaternary structure, tetramer of two alpha and two beta chains.

The catalysed reaction is (1S,2R)-1-C-(indol-3-yl)glycerol 3-phosphate + L-serine = D-glyceraldehyde 3-phosphate + L-tryptophan + H2O. It participates in amino-acid biosynthesis; L-tryptophan biosynthesis; L-tryptophan from chorismate: step 5/5. The alpha subunit is responsible for the aldol cleavage of indoleglycerol phosphate to indole and glyceraldehyde 3-phosphate. This Paraburkholderia phytofirmans (strain DSM 17436 / LMG 22146 / PsJN) (Burkholderia phytofirmans) protein is Tryptophan synthase alpha chain.